The chain runs to 335 residues: Mevalonate kinase (335 aa).

Residue 111–121 (PVGAGLGSSAA) coordinates ATP. Asp-162 serves as the catalytic Proton acceptor.

Belongs to the GHMP kinase family. Mevalonate kinase subfamily. As to quaternary structure, homodimer. The cofactor is Mg(2+).

The protein localises to the cytoplasm. It carries out the reaction (R)-mevalonate + ATP = (R)-5-phosphomevalonate + ADP + H(+). It participates in isoprenoid biosynthesis; isopentenyl diphosphate biosynthesis via mevalonate pathway; isopentenyl diphosphate from (R)-mevalonate: step 1/3. Functionally, catalyzes the phosphorylation of (R)-mevalonate (MVA) to (R)-mevalonate 5-phosphate (MVAP). Functions in the mevalonate (MVA) pathway leading to isopentenyl diphosphate (IPP), a key precursor for the biosynthesis of isoprenoid compounds such as archaeal membrane lipids. This is Mevalonate kinase from Pyrococcus horikoshii (strain ATCC 700860 / DSM 12428 / JCM 9974 / NBRC 100139 / OT-3).